The sequence spans 128 residues: Large ribosomal subunit protein bL12 (128 aa).

In terms of assembly, homodimer. Part of the 50S ribosomal subunit; present in 6 copies per ribosome. Forms part of the ribosomal stalk which helps the ribosome interact with GTP-bound translation factors. Forms a heptameric L10(L12)2(L12)2(L12)2 complex, where L10 forms an elongated spine to which 3 L12 dimers bind in a sequential fashion.

Its function is as follows. Forms part of the ribosomal stalk which helps the ribosome interact with GTP-bound translation factors. Is thus essential for accurate translation. The sequence is that of Large ribosomal subunit protein bL12 from Thermotoga maritima (strain ATCC 43589 / DSM 3109 / JCM 10099 / NBRC 100826 / MSB8).